A 646-amino-acid polypeptide reads, in one-letter code: Kinesin-like protein klp-20 (646 aa).

The 326-residue stretch at 6 to 331 folds into the Kinesin motor domain; that stretch reads KVKVVVRCRP…LRYANRAKNI (326 aa). 91 to 98 lines the ATP pocket; it reads GQTGTGKT. Residues 342 to 552 adopt a coiled-coil conformation; it reads KDAQLRKFQL…LRKELLLNIA (211 aa). The interaction with klp-11 stretch occupies residues 525–550; sequence LEEDHQRQVEAMLDDIRQLRKELLLN. The interval 623–646 is disordered; sequence TAEHRPRTSSKKHRASIRLQQLLT. The segment covering 629-638 has biased composition (basic residues); that stretch reads RTSSKKHRAS.

The protein belongs to the TRAFAC class myosin-kinesin ATPase superfamily. Kinesin family. Kinesin II subfamily. Component of the kinesin II motor complex, a heterotrimeric complex composed of kap-1, klp-11 and klp-20. Interacts (via C-terminus) with klp-11 (via C-terminus) to form a heterodimer. Furthermore, within the heterodimer, the C-termini of klp-20 and klp-11 interact to form a coiled coil (stalk) or tail domain, and this is necessary for association with kap-1, and kinesin II motor complex activity upon IFT cargo binding. Prior to cargo binding, the klp-11/klp-20 heterodimer is autoinhibited by the tail domain of the heterodimer, which folds onto the kinesin motor domain. Cargo binding to the heterodimer relieves the autoinhibition, and allows for an extended conformation of the tail domain, and function of the heterodimer.

Its subcellular location is the cell projection. The protein localises to the cilium. It localises to the cytoplasm. The protein resides in the cytoskeleton. In terms of biological role, component of the kinesin II motor complex (composed of kap-1 and the heterodimeric motor proteins klp-11 and klp-20) which is required for intraflagellar transport (IFT). Heterodimerizes with klp-11 to form a 'processive' molecular motor upon IFT cargo binding, which, within the kinesin II motor complex, binds to and moves along microtubules in a unidirectional manner (without dissociation of the heterodimer), and in turn, is responsible for the IFT of cargo. Specifically, the kinesin II motor complex, together with the kinesin motor protein osm-3 moves along microtubules and is required for anterograde IFT along the middle segment of the sensory neuron cilia. In particular, the kinesin II motor complex delivers specific ciliary cargo proteins such as che-3 which are related to motility to ciliary tips. This is likely mediated by IFT complexes A and B. In Caenorhabditis elegans, this protein is Kinesin-like protein klp-20.